The following is a 337-amino-acid chain: Holliday junction branch migration complex subunit RuvB (337 aa).

The segment at 1–179 is large ATPase domain (RuvB-L); it reads MTHQVSVLHQ…FSFSGRVSYY (179 aa). ATP-binding positions include leucine 18, arginine 19, glycine 60, lysine 63, threonine 64, serine 65, 126-128, arginine 169, tyrosine 179, and arginine 216; that span reads EDY. Threonine 64 serves as a coordination point for Mg(2+). The segment at 180-250 is small ATPAse domain (RuvB-S); sequence SDEDLATILK…VAEKALSMLL (71 aa). The interval 253-337 is head domain (RuvB-H); that stretch reads DWGLNEIDIK…DNLQILGEEK (85 aa). 2 residues coordinate DNA: lysine 308 and arginine 313.

Belongs to the RuvB family. Homohexamer. Forms an RuvA(8)-RuvB(12)-Holliday junction (HJ) complex. HJ DNA is sandwiched between 2 RuvA tetramers; dsDNA enters through RuvA and exits via RuvB. An RuvB hexamer assembles on each DNA strand where it exits the tetramer. Each RuvB hexamer is contacted by two RuvA subunits (via domain III) on 2 adjacent RuvB subunits; this complex drives branch migration. In the full resolvosome a probable DNA-RuvA(4)-RuvB(12)-RuvC(2) complex forms which resolves the HJ.

Its subcellular location is the cytoplasm. It carries out the reaction ATP + H2O = ADP + phosphate + H(+). Its function is as follows. The RuvA-RuvB-RuvC complex processes Holliday junction (HJ) DNA during genetic recombination and DNA repair, while the RuvA-RuvB complex plays an important role in the rescue of blocked DNA replication forks via replication fork reversal (RFR). RuvA specifically binds to HJ cruciform DNA, conferring on it an open structure. The RuvB hexamer acts as an ATP-dependent pump, pulling dsDNA into and through the RuvAB complex. RuvB forms 2 homohexamers on either side of HJ DNA bound by 1 or 2 RuvA tetramers; 4 subunits per hexamer contact DNA at a time. Coordinated motions by a converter formed by DNA-disengaged RuvB subunits stimulates ATP hydrolysis and nucleotide exchange. Immobilization of the converter enables RuvB to convert the ATP-contained energy into a lever motion, pulling 2 nucleotides of DNA out of the RuvA tetramer per ATP hydrolyzed, thus driving DNA branch migration. The RuvB motors rotate together with the DNA substrate, which together with the progressing nucleotide cycle form the mechanistic basis for DNA recombination by continuous HJ branch migration. Branch migration allows RuvC to scan DNA until it finds its consensus sequence, where it cleaves and resolves cruciform DNA. The sequence is that of Holliday junction branch migration complex subunit RuvB from Chlamydia felis (strain Fe/C-56) (Chlamydophila felis).